The following is a 1454-amino-acid chain: Serine/threonine-protein kinase VPS15 (1454 aa).

Gly2 carries the N-myristoyl glycine lipid modification. In terms of domain architecture, Protein kinase spans 27-300; it reads VHYVSQLNSS…LLNKYRGIFF (274 aa). ATP contacts are provided by residues 33 to 41 and Lys54; that span reads LNSSRFLKT. Asp147 (proton acceptor) is an active-site residue. 4 HEAT repeats span residues 460 to 497, 576 to 613, 615 to 652, and 654 to 691; these read NKID…SVRK, KLIQ…FFGR, RTND…LLGT, and TLEQ…TGLI. WD repeat units follow at residues 1078 to 1118, 1126 to 1165, 1229 to 1268, 1275 to 1315, 1344 to 1382, and 1422 to 1454; these read NEPN…VGEV, DCSS…QESE, PRHG…LIRS, APIT…CQYA, RSLN…SSKA, and YHHD…GIFQ.

This sequence belongs to the protein kinase superfamily. Ser/Thr protein kinase family. As to quaternary structure, component of the autophagy-specific VPS34 PI3-kinase complex I composed of VPS15, VPS30, VPS34, ATG14 and ATG38; and of the VPS34 PI3-kinase complex II composed of VPS15, VPS30, VPS34 and VPS38. Interacts directly with ATG14 and GPA1. Interacts directly with VPS34. Autophosphorylated.

It is found in the golgi apparatus. The protein localises to the trans-Golgi network membrane. Its subcellular location is the endosome membrane. It catalyses the reaction L-seryl-[protein] + ATP = O-phospho-L-seryl-[protein] + ADP + H(+). The enzyme catalyses L-threonyl-[protein] + ATP = O-phospho-L-threonyl-[protein] + ADP + H(+). Functionally, serine/threonine-protein kinase required for cytoplasm to vacuole transport (Cvt) and autophagy as a part of the autophagy-specific VPS34 PI3-kinase complex I. This complex is essential to recruit the ATG8-phosphatidylinositol conjugate and the ATG12-ATG5 conjugate to the pre-autophagosomal structure. Is also involved in endosome-to-Golgi retrograde transport as part of the VPS34 PI3-kinase complex II. This second complex is required for the endosome-to-Golgi retrieval of PEP1 and KEX2, and the recruitment of VPS5 and VPS7, two components of the retromer complex, to endosomal membranes (probably through the synthesis of a specific pool of phosphatidylinositol 3-phosphate recruiting the retromer to the endosomes). By regulating VPS34 kinase activity, VPS15 appears to be essential for the efficient delivery of soluble hydrolases to the yeast vacuole. May function as a G protein beta subunit to propagate the pheromone response at the endosome with GPA1. In Saccharomyces cerevisiae (strain ATCC 204508 / S288c) (Baker's yeast), this protein is Serine/threonine-protein kinase VPS15.